A 338-amino-acid chain; its full sequence is uncharacterized protein (338 aa).

A signal peptide spans 1 to 29; the sequence is MIKQLYKNITICSLTISTALTVFPATSYA.

This sequence belongs to the aerolysin family.

This is an uncharacterized protein from Staphylococcus aureus (strain bovine RF122 / ET3-1).